We begin with the raw amino-acid sequence, 580 residues long: uncharacterized protein (580 aa).

The region spanning 300-525 (PGYTATFLET…LRVLVELGYD (226 aa)) is the PE-PPE domain.

The protein belongs to the mycobacterial PPE family.

This is an uncharacterized protein from Mycobacterium tuberculosis (strain CDC 1551 / Oshkosh).